The primary structure comprises 83 residues: Ferredoxin (83 aa).

4Fe-4S ferredoxin-type domains are found at residues 2 to 29 (ALMI…QGDE) and 31 to 64 (YVIE…KDPS). Residues cysteine 9, cysteine 12, cysteine 15, cysteine 19, cysteine 38, cysteine 41, cysteine 50, and cysteine 54 each contribute to the [4Fe-4S] cluster site.

[4Fe-4S] cluster is required as a cofactor.

In terms of biological role, ferredoxins are iron-sulfur proteins that transfer electrons in a wide variety of metabolic reactions. The polypeptide is Ferredoxin (fdx) (Allochromatium vinosum (strain ATCC 17899 / DSM 180 / NBRC 103801 / NCIMB 10441 / D) (Chromatium vinosum)).